The chain runs to 204 residues: Dephospho-CoA kinase (204 aa).

Residues 13-204 form the DPCK domain; that stretch reads RIGLTGGIAS…LWKNTIKKLV (192 aa). ATP is bound at residue 21 to 26; sequence ASGKST.

Belongs to the CoaE family.

The protein resides in the cytoplasm. It catalyses the reaction 3'-dephospho-CoA + ATP = ADP + CoA + H(+). The protein operates within cofactor biosynthesis; coenzyme A biosynthesis; CoA from (R)-pantothenate: step 5/5. Functionally, catalyzes the phosphorylation of the 3'-hydroxyl group of dephosphocoenzyme A to form coenzyme A. This chain is Dephospho-CoA kinase, found in Prochlorococcus marinus subsp. pastoris (strain CCMP1986 / NIES-2087 / MED4).